We begin with the raw amino-acid sequence, 81 residues long: Cytotoxin 8 (81 aa).

A signal peptide spans methionine 1–threonine 21. 4 disulfide bridges follow: cysteine 24–cysteine 42, cysteine 35–cysteine 59, cysteine 63–cysteine 74, and cysteine 75–cysteine 80.

Belongs to the three-finger toxin family. Short-chain subfamily. Type IA cytotoxin sub-subfamily. Monomer in solution; Homodimer and oligomer in the presence of negatively charged lipids forming a pore with a size ranging between 20 and 30 Angstroms. In terms of tissue distribution, expressed by the venom gland.

It localises to the secreted. Its subcellular location is the target cell membrane. In terms of biological role, shows cytolytic activity on many different cells by forming pore in lipid membranes. In vivo, increases heart rate or kills the animal by cardiac arrest. In addition, it binds to heparin with high affinity, interacts with Kv channel-interacting protein 1 (KCNIP1) in a calcium-independent manner, and binds to integrin alpha-V/beta-3 (ITGAV/ITGB3) with moderate affinity. The sequence is that of Cytotoxin 8 from Naja atra (Chinese cobra).